The primary structure comprises 334 residues: 3-ketodihydrosphingosine reductase (334 aa).

Positions 1-20 are cleaved as a signal peptide; that stretch reads MIIYILFSLLAAVIVHLVYK. G36, S38, S39, G40, R62, K66, D100, and I101 together coordinate NADPH. Residues 36 to 40 carry the GXSXG motif; sequence GGSSG. Residue S182 is the Proton donor of the active site. Y196 acts as the Proton acceptor in catalysis. Positions 196 and 200 each coordinate NADP(+). K200 (lowers pKa of active site Tyr) is an active-site residue.

The protein belongs to the short-chain dehydrogenases/reductases (SDR) family.

The protein localises to the endoplasmic reticulum. It catalyses the reaction sphinganine + NADP(+) = 3-oxosphinganine + NADPH + H(+). Its pathway is lipid metabolism; sphingolipid metabolism. In terms of biological role, catalyzes the reduction of 3'-oxosphinganine (3-ketodihydrosphingosine/KDS) to sphinganine (dihydrosphingosine/DHS), the second step of de novo sphingolipid biosynthesis. This is 3-ketodihydrosphingosine reductase (ksrA-1) from Dictyostelium discoideum (Social amoeba).